The sequence spans 529 residues: Peptide chain release factor 3 (529 aa).

One can recognise a tr-type G domain in the interval 10 to 279; sequence EQRRCFGIIS…ALVEMAPAPG (270 aa). GTP-binding positions include 19 to 26, 87 to 91, and 141 to 144; these read SHPDAGKT, DTPGH, and NKMD.

It belongs to the TRAFAC class translation factor GTPase superfamily. Classic translation factor GTPase family. PrfC subfamily.

It localises to the cytoplasm. Its function is as follows. Increases the formation of ribosomal termination complexes and stimulates activities of RF-1 and RF-2. It binds guanine nucleotides and has strong preference for UGA stop codons. It may interact directly with the ribosome. The stimulation of RF-1 and RF-2 is significantly reduced by GTP and GDP, but not by GMP. The protein is Peptide chain release factor 3 of Desulfatibacillum aliphaticivorans.